A 460-amino-acid chain; its full sequence is UDP-N-acetylmuramate--L-alanine ligase (460 aa).

An ATP-binding site is contributed by 116–122 (GSHGKTT).

It belongs to the MurCDEF family.

Its subcellular location is the cytoplasm. It carries out the reaction UDP-N-acetyl-alpha-D-muramate + L-alanine + ATP = UDP-N-acetyl-alpha-D-muramoyl-L-alanine + ADP + phosphate + H(+). It functions in the pathway cell wall biogenesis; peptidoglycan biosynthesis. Its function is as follows. Cell wall formation. This is UDP-N-acetylmuramate--L-alanine ligase from Caldanaerobacter subterraneus subsp. tengcongensis (strain DSM 15242 / JCM 11007 / NBRC 100824 / MB4) (Thermoanaerobacter tengcongensis).